The chain runs to 259 residues: Cell division protein DivIB (259 aa).

The Cytoplasmic segment spans residues 1-27 (MADGKVIDIEQKVPDFREQRRRKSRRR). Residues 28 to 45 (LVLYISILAFFLLFVYYF) traverse the membrane as a helical segment. Topologically, residues 46–259 (QSDYSTVGHV…QEEEEIEIEE (214 aa)) are extracellular. In terms of domain architecture, POTRA spans 50–118 (STVGHVDVYG…RSITLYVDEY (69 aa)).

The protein belongs to the FtsQ/DivIB family. DivIB subfamily.

It localises to the cell membrane. Cell division protein that may be involved in stabilizing or promoting the assembly of the division complex. The polypeptide is Cell division protein DivIB (Bacillus selenitireducens (strain ATCC 700615 / DSM 15326 / MLS10)).